We begin with the raw amino-acid sequence, 364 residues long: Fructose-bisphosphate aldolase C (364 aa).

Phosphotyrosine is present on tyrosine 5. A phosphoserine mark is found at serine 36, serine 39, and serine 45. Arginine 56 is a binding site for substrate. Lysine 111 bears the N6-acetyllysine mark. A Phosphoserine modification is found at serine 132. Lysine 147 lines the substrate pocket. Glutamate 188 serves as the catalytic Proton acceptor. Lysine 230 (schiff-base intermediate with dihydroxyacetone-P) is an active-site residue.

It belongs to the class I fructose-bisphosphate aldolase family. Homotetramer. Interacts with ATP6V1E1. May interact with PLD2.

It carries out the reaction beta-D-fructose 1,6-bisphosphate = D-glyceraldehyde 3-phosphate + dihydroxyacetone phosphate. Its pathway is carbohydrate degradation; glycolysis; D-glyceraldehyde 3-phosphate and glycerone phosphate from D-glucose: step 4/4. The sequence is that of Fructose-bisphosphate aldolase C (ALDOC) from Homo sapiens (Human).